The chain runs to 83 residues: Large ribosomal subunit protein bL27c (83 aa).

The tract at residues 1 to 21 is disordered; it reads MAHKKGAGSTKNGRDSNAKRL.

Belongs to the bacterial ribosomal protein bL27 family.

The protein resides in the plastid. It is found in the chloroplast. This is Large ribosomal subunit protein bL27c from Phaeodactylum tricornutum (strain CCAP 1055/1).